Here is a 208-residue protein sequence, read N- to C-terminus: Adenylyl-sulfate kinase (208 aa).

35–42 (GLSGSGKS) provides a ligand contact to ATP. Ser-109 functions as the Phosphoserine intermediate in the catalytic mechanism.

It belongs to the APS kinase family.

It carries out the reaction adenosine 5'-phosphosulfate + ATP = 3'-phosphoadenylyl sulfate + ADP + H(+). It functions in the pathway sulfur metabolism; hydrogen sulfide biosynthesis; sulfite from sulfate: step 2/3. In terms of biological role, catalyzes the synthesis of activated sulfate. This Geotalea uraniireducens (strain Rf4) (Geobacter uraniireducens) protein is Adenylyl-sulfate kinase.